Consider the following 835-residue polypeptide: MAASAAAATAAASAATAASAASGSPGSGEGSAGGEKRPAASSAAAASASASSPAGGGGEAQELLEHCGVCRERLRPERDPRLLPCLHSACSACLGPATPAAANNSGDGGSAGDGAMVDCPVCKQQCYSKDIVENYFMRDSGSKASSDSQDANQCCTSCEDNAPATSYCVECSEPLCETCVEAHQRVKYTKDHTVRSTGPAKTRDGERTVYCNVHKHEPLVLFCESCDTLTCRDCQLNAHKDHQYQFLEDAVRNQRKLLASLVKRLGDKHATLQKNTKEVRSSIRQVSDVQKRVQVDVKMAILQIMKELNKRGRVLVNDAQKVTEGQQERLERQHWTMTKIQKHQEHILRFASWALESDNNTALLLSKKLIYFQLHRALKMIVDPVEPHGEMKFQWDLNAWTKSAEAFGKIVAERPGTNSTGPGPMAPPRAPGPLSKQGSGSSQPMEVQEGYGFGTDDPYSSAEPHVSGMKRSRSGEGEVSGLMRKVPRVSLERLDLDLTSDSQPPVFKVFPGSTTEDYNLIVIERGAAAAAAGQAGTVPPGAPGAPPLPGMAIVKEEETEAAIGAPPAAPEGPETKPVLMALTEGPGAEGPRLASPSGSTSSGLEVVAPEVTSAPVSGPGILDDSATICRVCQKPGDLVMCNQCEFCFHLDCHLPSLQDVPGEEWSCSLCHVLPDLKEEDGSLSLDGADSTGVVAKLSPANQRKCERVLLALFCHEPCRPLHQLATDSTFSMEQPGGTLDLTLIRARLQEKLSPPYSSPQEFAQDVGRMFKQFNKLTEDKADVQSIIGLQRFFETRMNDAFGDTKFSAVLVEPPPLNLPSAGLSSQELSGPGDGP.

Low complexity predominate over residues 14–24 (AATAASAASGS). The interval 14–57 (AATAASAASGSPGSGEGSAGGEKRPAASSAAAASASASSPAGGG) is disordered. Residues serine 24, serine 27, and serine 31 each carry the phosphoserine modification. Residue lysine 36 forms a Glycyl lysine isopeptide (Lys-Gly) (interchain with G-Cter in SUMO2) linkage. The segment covering 39-53 (AASSAAAASASASSP) has biased composition (low complexity). Serine 52 is subject to Phosphoserine. The segment at 67–123 (CGVCRERLRPERDPRLLPCLHSACSACLGPATPAAANNSGDGGSAGDGAMVDCPVCK) adopts an RING-type zinc-finger fold. A Glycyl lysine isopeptide (Lys-Gly) (interchain with G-Cter in SUMO2) cross-link involves residue lysine 129. Residue serine 140 is modified to Phosphoserine. The B box-type 1; atypical zinc-finger motif lies at 150-197 (DANQCCTSCEDNAPATSYCVECSEPLCETCVEAHQRVKYTKDHTVRST). The Zn(2+) site is built by cysteine 155, cysteine 158, cysteine 179, and histidine 183. Lysine 201 is covalently cross-linked (Glycyl lysine isopeptide (Lys-Gly) (interchain with G-Cter in SUMO2)). A B box-type 2 zinc finger spans residues 206 to 247 (ERTVYCNVHKHEPLVLFCESCDTLTCRDCQLNAHKDHQYQFL). Zn(2+) contacts are provided by cysteine 211, histidine 214, cysteine 234, and histidine 239. The tract at residues 248–378 (EDAVRNQRKL…LIYFQLHRAL (131 aa)) is leucine zipper alpha helical coiled-coil region. Residues 249–378 (DAVRNQRKLL…LIYFQLHRAL (130 aa)) are interaction with MAGEC2. Residues lysine 256 and lysine 263 each participate in a glycyl lysine isopeptide (Lys-Gly) (interchain with G-Cter in SUMO2) cross-link. Position 268 is an N6-acetyllysine (lysine 268). Lysine 274 is covalently cross-linked (Glycyl lysine isopeptide (Lys-Gly) (interchain with G-Cter in SUMO2)). At lysine 306 the chain carries N6-acetyllysine; alternate. Residue lysine 306 forms a Glycyl lysine isopeptide (Lys-Gly) (interchain with G-Cter in SUMO2); alternate linkage. Lysine 321 participates in a covalent cross-link: Glycyl lysine isopeptide (Lys-Gly) (interchain with G-Cter in SUMO2). The residue at position 342 (lysine 342) is an N6-acetyllysine. Lysine 368 is covalently cross-linked (Glycyl lysine isopeptide (Lys-Gly) (interchain with G-Cter in SUMO2)). An involved in binding PPP1CA region spans residues 368 to 372 (KLIYF). Residue lysine 379 is modified to N6-acetyllysine; alternate. Residue lysine 379 forms a Glycyl lysine isopeptide (Lys-Gly) (interchain with G-Cter in SUMO2); alternate linkage. A Glycyl lysine isopeptide (Lys-Gly) (interchain with G-Cter in SUMO1); alternate cross-link involves residue lysine 379. A Glycyl lysine isopeptide (Lys-Gly) (interchain with G-Cter in SUMO2) cross-link involves residue lysine 409. The disordered stretch occupies residues 413–481 (ERPGTNSTGP…SRSGEGEVSG (69 aa)). Position 419 is a phosphoserine (serine 419). Residue lysine 436 forms a Glycyl lysine isopeptide (Lys-Gly) (interchain with G-Cter in SUMO2) linkage. Polar residues predominate over residues 436–445 (KQGSGSSQPM). Phosphoserine is present on residues serine 439 and serine 441. Residue lysine 470 forms a Glycyl lysine isopeptide (Lys-Gly) (interchain with G-Cter in SUMO2); alternate linkage. Lysine 470 participates in a covalent cross-link: Glycyl lysine isopeptide (Lys-Gly) (interchain with G-Cter in SUMO1); alternate. Citrulline is present on arginine 471. Serine 472 carries the phosphoserine modification. Residue arginine 473 is modified to Citrulline. Serine 474, serine 480, and serine 490 each carry phosphoserine. Residues 477 to 514 (GEVSGLMRKVPRVSLERLDLDLTSDSQPPVFKVFPGST) are HP1 box. The PxVxL motif signature appears at 482–495 (LMRKVPRVSLERLD). Phosphothreonine is present on threonine 499. Residue serine 502 is modified to Phosphoserine. Lysine 508 participates in a covalent cross-link: Glycyl lysine isopeptide (Lys-Gly) (interchain with G-Cter in SUMO2). Residue lysine 555 forms a Glycyl lysine isopeptide (Lys-Gly) (interchain with G-Cter in SUMO2); alternate linkage. Lysine 555 participates in a covalent cross-link: Glycyl lysine isopeptide (Lys-Gly) (interchain with G-Cter in SUMO); alternate. Lysine 576 participates in a covalent cross-link: Glycyl lysine isopeptide (Lys-Gly) (interchain with G-Cter in SUMO2). Serine 595 carries the post-translational modification Phosphoserine. The PHD-type zinc finger occupies 626 to 673 (ATICRVCQKPGDLVMCNQCEFCFHLDCHLPSLQDVPGEEWSCSLCHVL). Residue lysine 677 forms a Glycyl lysine isopeptide (Lys-Gly) (interchain with G-Cter in SUMO) linkage. Phosphoserine is present on residues serine 684, serine 690, and serine 698. The Bromo domain occupies 696 to 800 (KLSPANQRKC…RFFETRMNDA (105 aa)). Lysine 751 participates in a covalent cross-link: Glycyl lysine isopeptide (Lys-Gly) (interchain with G-Cter in SUMO2); alternate. A Glycyl lysine isopeptide (Lys-Gly) (interchain with G-Cter in SUMO1); alternate cross-link involves residue lysine 751. Lysine 751 is covalently cross-linked (Glycyl lysine isopeptide (Lys-Gly) (interchain with G-Cter in SUMO); alternate). Serine 753 carries the post-translational modification Phosphoserine. Tyrosine 756 carries the phosphotyrosine modification. Residue serine 758 is modified to Phosphoserine. N6-acetyllysine; alternate occurs at positions 771, 775, and 780. Glycyl lysine isopeptide (Lys-Gly) (interchain with G-Cter in SUMO2); alternate cross-links involve residues lysine 771, lysine 775, and lysine 780. Lysine 780 participates in a covalent cross-link: Glycyl lysine isopeptide (Lys-Gly) (interchain with G-Cter in SUMO1); alternate. A Phosphoserine modification is found at serine 785. A Glycyl lysine isopeptide (Lys-Gly) (interchain with G-Cter in SUMO2) cross-link involves residue lysine 805. A Phosphoserine; by ATM and ATR and dsDNA kinase modification is found at serine 825.

It belongs to the TRIM/RBCC family. In terms of assembly, interacts with ZNF382. Interacts with SETX. Oligomer; the RBCC domain homotrimerizes and interacts with one molecule of KRAB to form the KRAB-KAP1 corepressor complex. Binding to a KRAB domain is an absolute requirement for silencing gene expression. Interacts with CEBPB and NR3C1. Interacts with a number of KRAB-ZFP proteins including ZNF10, ZFP53, ZFP68 and ZNF256. Interacts with NCOR1, NR3C1 and CHD3. Interacts with CEBPB (via the RING-type and PHD-type zinc fingers). Component of a ternary complex that includes TRIM28, a HP1 protein (CBX1, CBX3 OR CBX5), a KRAB domain-containing protein, and DNA. Interacts with CBX5 (via the PxVxL motif); the interaction occurs in interphase nuclei and competes for binding POGZ. Interacts with POGZ; the interaction competes for interaction with CBX5. Interacts with SETDB1; the interaction is enhanced by KAP1 sumoylation, stimulates SETDB1 histone methyltransferase activity and gene silencing. Interacts (via the PHD-type zinc finger) with UBE2I; the interaction is required for sumoylation and repressor activity. Component of the TRIM28/KAP1-ERBB4-MDM2 complex involved in connecting growth factor and DNA damage responses. Interacts directly with ERBB4; the interaction represses ERBB4-mediated transcription activity. Interacts with MDM2; the interaction contributes to p53/TP53 inactivation. Component of the TRIM28/KAP1-MDM2-p53/TP53; involved in regulating p53/TP53 stabilization and activity. Interacts (via the leucine zipper alpha helical coiled-coil) with E2F1 (central region); the interaction inhibits E2F1 acetylation and transcriptional activity. Interacts with PPP1CA; the interaction dephosphorylates TRIM28 at Ser-824 and forms a complex at the p21 promoter site. Interacts with PPP1CB; the interaction is weak but is increased on dephosphorylation at Ser-824. Interacts with SMARCAD1. Interacts with, and sumoylates IRF7. Interacts with MAGEC2. Part of a complex composed of TRIM28, HDAC1, HDAC2 and EHMT2. Interacts with AICDA. The large PER complex involved in the histone methylation is composed of at least PER2, CBX3, TRIM28, SUV39H1 and/or SUV39H2; CBX3 mediates the formation of the complex. Interacts with NR4A3; the interactions potentiates NR4A3 activity on NurRE promoter. Interacts (unphosphorylated or phosphorylated form) with ZBTB1 (via BTB domain). Probably part of a corepressor complex containing ZNF304, TRIM28, SETDB1 and DNMT1. Interacts with ATRX. Forms a complex with ATRX, SETDB1 and ZNF274. Interacts with ZFP568; the interaction mediates ZFP568 transcriptional repression activity. Interacts with RRP1B. Interacts with CRY1. Interacts with ZNF263; recruited to the SIX3 promoter along with other proteins involved in chromatin modification and transcriptional corepression where it contributes to transcriptional repression. Interacts with CYREN (via XLF motif). Interacts with TRIM17; this interaction prevents TRIM28 activity. Interacts with ZNF746. Interacts with PHF13. Interacts with ZNF354C. Interacts with ZNF432; the interaction is independent of PARP1. In terms of processing, ATM-induced phosphorylation on Ser-825 represses sumoylation leading to the de-repression of expression of a subset of genes involved in cell cycle control and apoptosis in response to genotoxic stress. Dephosphorylation by the phosphatases, PPP1CA and PP1CB forms, allows sumoylation and expression of TRIM28 target genes. Sumoylation/desumoylation events regulate TRIM28-mediated transcriptional repression. Sumoylation is required for interaction with CHD3 and SETDB1 and the corepressor activity. Represses and is repressed by Ser-824 phosphorylation. Enhances the TRIM28 corepressor activity, inhibiting transcriptional activity of a number of genes including GADD45A and CDKN1A/p21. Lys-555, Lys-780 and Lys-805 are the major sites of sumoylation. In response to Dox-induced DNA damage, enhanced phosphorylation on Ser-825 prevents sumoylation and allows de-repression of CDKN1A/p21. Post-translationally, auto-ubiquitinated; enhanced by MAGEA2 and MAGEC2. In terms of processing, citrullinated by PADI4. ADP-ribosylated by SIRT6, promoting TRIM28/KAP1 interaction with CBX5, thereby contributing to the packaging of LINE-1 retrotransposon elements into transcriptionally repressive heterochromatin.

The protein localises to the nucleus. The enzyme catalyses S-ubiquitinyl-[E2 ubiquitin-conjugating enzyme]-L-cysteine + [acceptor protein]-L-lysine = [E2 ubiquitin-conjugating enzyme]-L-cysteine + N(6)-ubiquitinyl-[acceptor protein]-L-lysine.. It participates in protein modification; protein sumoylation. Nuclear corepressor for KRAB domain-containing zinc finger proteins (KRAB-ZFPs). Mediates gene silencing by recruiting CHD3, a subunit of the nucleosome remodeling and deacetylation (NuRD) complex, and SETDB1 (which specifically methylates histone H3 at 'Lys-9' (H3K9me)) to the promoter regions of KRAB target genes. Enhances transcriptional repression by coordinating the increase in H3K9me, the decrease in histone H3 'Lys-9 and 'Lys-14' acetylation (H3K9ac and H3K14ac, respectively) and the disposition of HP1 proteins to silence gene expression. Recruitment of SETDB1 induces heterochromatinization. May play a role as a coactivator for CEBPB and NR3C1 in the transcriptional activation of ORM1. Also a corepressor for ERBB4. Inhibits E2F1 activity by stimulating E2F1-HDAC1 complex formation and inhibiting E2F1 acetylation. May serve as a partial backup to prevent E2F1-mediated apoptosis in the absence of RB1. Important regulator of CDKN1A/p21(CIP1). Has E3 SUMO-protein ligase activity toward itself via its PHD-type zinc finger. Also specifically sumoylates IRF7, thereby inhibiting its transactivation activity. Ubiquitinates p53/TP53 leading to its proteasomal degradation; the function is enhanced by MAGEC2 and MAGEA2, and possibly MAGEA3 and MAGEA6. Mediates the nuclear localization of KOX1, ZNF268 and ZNF300 transcription factors. In association with isoform 2 of ZFP90, is required for the transcriptional repressor activity of FOXP3 and the suppressive function of regulatory T-cells (Treg). Probably forms a corepressor complex required for activated KRAS-mediated promoter hypermethylation and transcriptional silencing of tumor suppressor genes (TSGs) or other tumor-related genes in colorectal cancer (CRC) cells. Required to maintain a transcriptionally repressive state of genes in undifferentiated embryonic stem cells (ESCs). In ESCs, in collaboration with SETDB1, is also required for H3K9me3 and silencing of endogenous and introduced retroviruses in a DNA-methylation independent-pathway. Associates at promoter regions of tumor suppressor genes (TSGs) leading to their gene silencing. The SETDB1-TRIM28-ZNF274 complex may play a role in recruiting ATRX to the 3'-exons of zinc finger genes with atypical chromatin signatures to establish or maintain/protect H3K9me3 at these transcriptionally active regions. In Rattus norvegicus (Rat), this protein is Transcription intermediary factor 1-beta.